The sequence spans 983 residues: Nitrate reductase [NADPH] (983 aa).

2 stretches are compositionally biased toward low complexity: residues 1 to 14 and 26 to 48; these read MTISTTSSSTSSKT and SSSSSPASSRSSSATTPEPSSPT. Positions 1–50 are disordered; that stretch reads MTISTTSSSTSSKTSSEKGDDLKGFSSSSSPASSRSSSATTPEPSSPTVL. Position 184 (Cys184) interacts with Mo-molybdopterin. Residues 585–662 form the Cytochrome b5 heme-binding domain; it reads DTIITAADLA…LRDFHLGRLE (78 aa). Heme contacts are provided by His622 and His645. Positions 688-815 constitute an FAD-binding FR-type domain; it reads KKWRATRLVS…KGPLGSFTYL (128 aa). Residues 746-749, 763-767, Phe768, Phe780, 784-786, Ser841, and Thr844 each bind FAD; these read RAYT, LIKVY, and KMT. 952–961 is a binding site for NADP(+); the sequence is LALVCGPPPM.

Belongs to the nitrate reductase family. As to quaternary structure, homodimer. The cofactor is FAD. It depends on heme as a cofactor. Mo-molybdopterin serves as cofactor.

The enzyme catalyses nitrite + NADP(+) + H2O = nitrate + NADPH + H(+). Its pathway is nitrogen metabolism; nitrate reduction (assimilation). Its function is as follows. Nitrate reductase is a key enzyme involved in the first step of nitrate assimilation in plants, fungi and bacteria. This chain is Nitrate reductase [NADPH] (NAR1), found in Mycosarcoma maydis (Corn smut fungus).